The following is a 206-amino-acid chain: Ribosomal RNA small subunit methyltransferase G (206 aa).

S-adenosyl-L-methionine is bound by residues Gly-74, Leu-79, 125-126 (VE), and Arg-140.

The protein belongs to the methyltransferase superfamily. RNA methyltransferase RsmG family.

The protein resides in the cytoplasm. The catalysed reaction is guanosine(527) in 16S rRNA + S-adenosyl-L-methionine = N(7)-methylguanosine(527) in 16S rRNA + S-adenosyl-L-homocysteine. Functionally, specifically methylates the N7 position of guanine in position 527 of 16S rRNA. The chain is Ribosomal RNA small subunit methyltransferase G from Shewanella oneidensis (strain ATCC 700550 / JCM 31522 / CIP 106686 / LMG 19005 / NCIMB 14063 / MR-1).